The sequence spans 32 residues: Photosystem II reaction center protein Psb30 (32 aa).

The chain crosses the membrane as a helical span at residues 3–23 (IVIVQLGSLALITLAGPIIIV).

It belongs to the Psb30/Ycf12 family. PSII is composed of 1 copy each of membrane proteins PsbA, PsbB, PsbC, PsbD, PsbE, PsbF, PsbH, PsbI, PsbJ, PsbK, PsbL, PsbM, PsbT, PsbY, PsbZ, Psb30/Ycf12, peripheral proteins of the oxygen-evolving complex and a large number of cofactors. It forms dimeric complexes.

It is found in the plastid. The protein resides in the chloroplast thylakoid membrane. Its function is as follows. A core subunit of photosystem II (PSII), probably helps stabilize the reaction center. The chain is Photosystem II reaction center protein Psb30 from Euglena viridis (Cercaria viridis).